The chain runs to 145 residues: Large ribosomal subunit protein uL11m (145 aa).

It belongs to the universal ribosomal protein uL11 family.

Its subcellular location is the mitochondrion. In Reclinomonas americana, this protein is Large ribosomal subunit protein uL11m (RPL11).